We begin with the raw amino-acid sequence, 201 residues long: Recombination protein RecR (201 aa).

The C4-type zinc finger occupies 60–75 (CQICGNIDTRDPCTIC). Residues 83-178 (TLLVVVETVA…KITRLAHGVP (96 aa)) enclose the Toprim domain.

It belongs to the RecR family.

In terms of biological role, may play a role in DNA repair. It seems to be involved in an RecBC-independent recombinational process of DNA repair. It may act with RecF and RecO. The sequence is that of Recombination protein RecR from Beijerinckia indica subsp. indica (strain ATCC 9039 / DSM 1715 / NCIMB 8712).